The primary structure comprises 245 residues: Fibroblast growth factor 13 (245 aa).

Positions Met1–Thr36 are disordered. The mediates targeting to the nucleus stretch occupies residues Met1–Pro62. Residues Lys67 to Val201 are mediates interaction with sodium channels. The tract at residues Ser157–Gln164 is tubulin-binding domain necessary and sufficient for tubulin-binding. Ser208 bears the Phosphoserine mark. The interval Thr213 to Thr245 is disordered. The span at Phe215–Thr245 shows a compositional bias: polar residues.

Belongs to the heparin-binding growth factors family. As to quaternary structure, interacts with SCN8A; regulates SCN8A activity. Interacts with SCN1A; may regulate SCN1A activity. Interacts with SCN5A; the interaction is direct and may regulate SNC5A density at membranes and function. May also interact with SCN2A and SCN11A. Interacts with MAPK8IP2; may regulate the MAPK8IP2 scaffolding activity. In terms of processing, may be phosphorylated. As to expression, detected in brain, eye and heart. In brain, the different isoforms display different patterns of expression. Expressed in brain and heart (at protein level). Isoform 3 is highly expressed in cardiac myocytes while isoform 1 is the most abundant in brain.

It localises to the cell projection. The protein localises to the filopodium. The protein resides in the growth cone. It is found in the dendrite. Its subcellular location is the cell membrane. It localises to the sarcolemma. The protein localises to the cytoplasm. The protein resides in the nucleus. Microtubule-binding protein which directly binds tubulin and is involved in both polymerization and stabilization of microtubules. Through its action on microtubules, may participate to the refinement of axons by negatively regulating axonal and leading processes branching. Plays a crucial role in neuron polarization and migration in the cerebral cortex and the hippocampus. Regulates voltage-gated sodium channel transport and function. May also play a role in MAPK signaling. Required for the development of axonal initial segment-targeting inhibitory GABAergic synapses made by chandelier neurons. In terms of biological role, seems not to be involved in neuroblast polarization and migration but regulates axon branching. This is Fibroblast growth factor 13 from Mus musculus (Mouse).